We begin with the raw amino-acid sequence, 469 residues long: Tetratricopeptide repeat protein 38 (469 aa).

A2 carries the N-acetylalanine modification. S5 bears the Phosphoserine mark. 3 TPR repeats span residues 108 to 141 (REQL…HPTD), 180 to 213 (SYVK…NPTD), and 252 to 285 (CHNY…SLQA).

This sequence belongs to the TTC38 family.

In Homo sapiens (Human), this protein is Tetratricopeptide repeat protein 38 (TTC38).